Reading from the N-terminus, the 834-residue chain is Probable phosphoenolpyruvate synthase (834 aa).

The active-site Tele-phosphohistidine intermediate is H447. Substrate-binding residues include R550, R598, E699, G720, S721, N722, and D723. E699 is a Mg(2+) binding site. D723 provides a ligand contact to Mg(2+). The active-site Proton donor is the C772.

Belongs to the PEP-utilizing enzyme family. In terms of assembly, homooligomer. Forms a large complex of about 2000 kDa. The cofactor is Mg(2+). Post-translationally, the N-terminus is blocked.

It catalyses the reaction pyruvate + ATP + H2O = phosphoenolpyruvate + AMP + phosphate + 2 H(+). It functions in the pathway carbohydrate biosynthesis; gluconeogenesis. Its function is as follows. Catalyzes the phosphorylation of pyruvate to phosphoenolpyruvate. The sequence is that of Probable phosphoenolpyruvate synthase (ppsA) from Staphylothermus marinus (strain ATCC 43588 / DSM 3639 / JCM 9404 / F1).